A 256-amino-acid chain; its full sequence is Probable elongation factor 1-delta (256 aa).

3 positions are modified to phosphoserine: Ser37, Ser53, and Ser89. The disordered stretch occupies residues 110–146 (NGVSKEPEVEAKKPEANDDDDDVDLFGSDSEEEDGEA). Positions 114 to 125 (KEPEVEAKKPEA) are enriched in basic and acidic residues. Residues 126-144 (NDDDDDVDLFGSDSEEEDG) show a composition bias toward acidic residues. Phosphoserine occurs at positions 137 and 139.

It belongs to the EF-1-beta/EF-1-delta family. As to quaternary structure, EF-1 is composed of 4 subunits: alpha, beta, delta, and gamma.

Functionally, EF-1-beta and EF-1-delta stimulate the exchange of GDP bound to EF-1-alpha to GTP. The chain is Probable elongation factor 1-delta (eEF1delta) from Drosophila melanogaster (Fruit fly).